A 256-amino-acid chain; its full sequence is Ribonuclease HII (256 aa).

In terms of domain architecture, RNase H type-2 spans 67–255 (QLVGGVDEVG…VSEMVGLKKA (189 aa)). Positions 73, 74, and 165 each coordinate a divalent metal cation.

It belongs to the RNase HII family. Mn(2+) is required as a cofactor. Requires Mg(2+) as cofactor.

The protein resides in the cytoplasm. The enzyme catalyses Endonucleolytic cleavage to 5'-phosphomonoester.. Its function is as follows. Endonuclease that specifically degrades the RNA of RNA-DNA hybrids. The chain is Ribonuclease HII from Lactobacillus delbrueckii subsp. bulgaricus (strain ATCC 11842 / DSM 20081 / BCRC 10696 / JCM 1002 / NBRC 13953 / NCIMB 11778 / NCTC 12712 / WDCM 00102 / Lb 14).